Reading from the N-terminus, the 199-residue chain is Recombination protein RecR (199 aa).

A C4-type zinc finger spans residues 57 to 72 (CSVCGNITEDDPCPIC). The Toprim domain maps to 80-176 (SRVLVVERSR…KVTRLAHGLS (97 aa)).

It belongs to the RecR family.

Functionally, may play a role in DNA repair. It seems to be involved in an RecBC-independent recombinational process of DNA repair. It may act with RecF and RecO. The sequence is that of Recombination protein RecR from Limosilactobacillus fermentum (strain NBRC 3956 / LMG 18251) (Lactobacillus fermentum).